The sequence spans 538 residues: Ubiquitin domain-containing protein DSK2a (538 aa).

The Ubiquitin-like domain maps to 18–93 (VAVNVRCSNG…VHMVRGFVPS (76 aa)). Residues 95–120 (PSAPAANAGNQTTAPQAVGSNDSSNL) form a disordered region. Residues 102–119 (AGNQTTAPQAVGSNDSSN) are compositionally biased toward polar residues. STI1 domains are found at residues 138–179 (GNAM…QNLM) and 192–231 (NPQMRELVDRNPELGHVLNDPSILRQTLEAARNPELMREM). The segment at 289–316 (QGVTTQGSDTSNNISAPNAETGTPNANP) is disordered. 2 STI1 domains span residues 357–394 (SPLGATPDASQLSQILQNPAMSQMMQSVLSNPQYMNQL) and 398–433 (NPQLRSMLDMNPQLREMMQNPDFLRQFSSPEMMQQM). Positions 491 to 535 (PPEERFATQLQQLQEMGFYDRAENIRALLATNGNVNAAVERLLGS) constitute a UBA domain.

Interacts with 'Lys-48'-linked polyubiquitin chains via its UBA domain. Interacts with RPN10 and RPN13. Interacts with PEX2 and PEX12. Ubiquitous with a strong expression level in inflorescence.

The protein localises to the nucleus. It is found in the cytoplasm. Functionally, binds and presumably selects ubiquitin-conjugates for destruction. Prefers multiubiquitin chains rather than single ubiquitins, with a binding affinity for 'Lys-48'-linked ubiquitin chains. Acts as a ubiquitin receptor that associates with the 26S proteasomal docking subunit RPN10 for the indirect recognition of ubiquitinated substrates of ubiquitin/26S proteasome-mediated proteolysis (UPP). This chain is Ubiquitin domain-containing protein DSK2a (DSK2A), found in Arabidopsis thaliana (Mouse-ear cress).